Reading from the N-terminus, the 48-residue chain is uncharacterized protein (48 aa).

This is an uncharacterized protein from Haemophilus influenzae (strain ATCC 51907 / DSM 11121 / KW20 / Rd).